The following is a 96-amino-acid chain: Phosphoribosyl-ATP pyrophosphatase (96 aa).

The protein belongs to the PRA-PH family.

The protein resides in the cytoplasm. The enzyme catalyses 1-(5-phospho-beta-D-ribosyl)-ATP + H2O = 1-(5-phospho-beta-D-ribosyl)-5'-AMP + diphosphate + H(+). The protein operates within amino-acid biosynthesis; L-histidine biosynthesis; L-histidine from 5-phospho-alpha-D-ribose 1-diphosphate: step 2/9. In Methanococcus aeolicus (strain ATCC BAA-1280 / DSM 17508 / OCM 812 / Nankai-3), this protein is Phosphoribosyl-ATP pyrophosphatase.